The sequence spans 107 residues: Ig kappa chain V-VI region XRPC 44 (107 aa).

Residues 1–23 (EIVLTQSPAITAASLGQKVTITC) are framework-1. Cys-23 and Cys-87 are disulfide-bonded. The complementarity-determining-1 stretch occupies residues 24-33 (SASSSVSYMH). The framework-2 stretch occupies residues 34 to 48 (WYQQKSGTSPKPWIY). Positions 49-55 (EISKLAS) are complementarity-determining-2. The interval 56-87 (GVPARFSGSGSGTSYSLTISSMEAEDAAIYYC) is framework-3. The tract at residues 88–96 (QQWNYPLWT) is complementarity-determining-3. A framework-4 region spans residues 97 to 106 (FGGGTKLEIK).

The protein is Ig kappa chain V-VI region XRPC 44 of Mus musculus (Mouse).